Consider the following 192-residue polypeptide: Peptidyl-tRNA hydrolase (192 aa).

Y17 contributes to the tRNA binding site. H22 serves as the catalytic Proton acceptor. Positions 67, 69, and 115 each coordinate tRNA.

It belongs to the PTH family. In terms of assembly, monomer.

It localises to the cytoplasm. The enzyme catalyses an N-acyl-L-alpha-aminoacyl-tRNA + H2O = an N-acyl-L-amino acid + a tRNA + H(+). Its function is as follows. Hydrolyzes ribosome-free peptidyl-tRNAs (with 1 or more amino acids incorporated), which drop off the ribosome during protein synthesis, or as a result of ribosome stalling. In terms of biological role, catalyzes the release of premature peptidyl moieties from peptidyl-tRNA molecules trapped in stalled 50S ribosomal subunits, and thus maintains levels of free tRNAs and 50S ribosomes. The chain is Peptidyl-tRNA hydrolase from Methylobacillus flagellatus (strain ATCC 51484 / DSM 6875 / VKM B-1610 / KT).